The primary structure comprises 108 residues: Virulence-associated protein I (108 aa).

One can recognise an HTH cro/C1-type domain in the interval 19–74; it reads LREEYLKPMGLSAHALAKALHVSPSRINEIVREQRGITADTALRLVRYFGGDAQSW. The segment at residues 30-49 is a DNA-binding region (H-T-H motif); sequence SAHALAKALHVSPSRINEIV.

This sequence belongs to the VapA/VapI family.

The protein is Virulence-associated protein I (vapI) of Dichelobacter nodosus (Bacteroides nodosus).